A 444-amino-acid polypeptide reads, in one-letter code: Tol-Pal system protein TolB (444 aa).

The first 31 residues, 1–31 (MSFDLNRRQLMISAATAAGALALGPARDAFG), serve as a signal peptide directing secretion.

Belongs to the TolB family. In terms of assembly, the Tol-Pal system is composed of five core proteins: the inner membrane proteins TolA, TolQ and TolR, the periplasmic protein TolB and the outer membrane protein Pal. They form a network linking the inner and outer membranes and the peptidoglycan layer.

The protein localises to the periplasm. In terms of biological role, part of the Tol-Pal system, which plays a role in outer membrane invagination during cell division and is important for maintaining outer membrane integrity. This chain is Tol-Pal system protein TolB, found in Rhodopseudomonas palustris (strain ATCC BAA-98 / CGA009).